The following is a 238-amino-acid chain: Aspartate/glutamate leucyltransferase (238 aa).

It belongs to the R-transferase family. Bpt subfamily.

The protein resides in the cytoplasm. The enzyme catalyses N-terminal L-glutamyl-[protein] + L-leucyl-tRNA(Leu) = N-terminal L-leucyl-L-glutamyl-[protein] + tRNA(Leu) + H(+). It carries out the reaction N-terminal L-aspartyl-[protein] + L-leucyl-tRNA(Leu) = N-terminal L-leucyl-L-aspartyl-[protein] + tRNA(Leu) + H(+). Functionally, functions in the N-end rule pathway of protein degradation where it conjugates Leu from its aminoacyl-tRNA to the N-termini of proteins containing an N-terminal aspartate or glutamate. The sequence is that of Aspartate/glutamate leucyltransferase from Shewanella sp. (strain MR-4).